Here is a 1035-residue protein sequence, read N- to C-terminus: DNA polymerase I B, mitochondrial (1035 aa).

The transit peptide at 1–42 (MAVAPPLPPAPARLLRRWQGSSPWLSSSFGRTRYFSRPAFAA) directs the protein to the mitochondrion. The disordered stretch occupies residues 100-124 (TNGTTPLRVGNLRHDPSEDIRSSNY). The span at 111 to 120 (LRHDPSEDIR) shows a compositional bias: basic and acidic residues. The 3'-5' exonuclease domain maps to 317–478 (FGNGKTCIWV…LYESLKNKLE (162 aa)). The tract at residues 699-1032 (HAIAALCEVF…VDAKYAKSWY (334 aa)) is polymerase.

Belongs to the DNA polymerase type-A family.

It localises to the mitochondrion. The catalysed reaction is DNA(n) + a 2'-deoxyribonucleoside 5'-triphosphate = DNA(n+1) + diphosphate. Its activity is regulated as follows. Not inhibited by aphidicolin. In terms of biological role, in addition to polymerase activity, this DNA polymerase exhibits 5'-3' exonuclease activity. May be required for DNA replication and accumulation in mitochondria. This Oryza sativa subsp. japonica (Rice) protein is DNA polymerase I B, mitochondrial.